Reading from the N-terminus, the 117-residue chain is Ubiquitin-like protein 3 (117 aa).

The Ubiquitin-like domain maps to 10-88; it reads INLRLILVSG…PFGKTTVMHL (79 aa). The S-palmitoyl cysteine moiety is linked to residue Cys-113. Cys-114 is subject to Cysteine methyl ester. Residue Cys-114 is the site of S-geranylgeranyl cysteine attachment. Residues 115 to 117 constitute a propeptide, removed in mature form; it reads VIL.

It localises to the cell membrane. The sequence is that of Ubiquitin-like protein 3 (Ubl3) from Mus musculus (Mouse).